Here is a 554-residue protein sequence, read N- to C-terminus: Dihydroxy-acid dehydratase (554 aa).

Position 78 (aspartate 78) interacts with Mg(2+). Residue cysteine 119 coordinates [2Fe-2S] cluster. Mg(2+) contacts are provided by aspartate 120 and lysine 121. Lysine 121 carries the post-translational modification N6-carboxylysine. Residue cysteine 192 coordinates [2Fe-2S] cluster. Glutamate 443 lines the Mg(2+) pocket. Serine 469 acts as the Proton acceptor in catalysis.

Belongs to the IlvD/Edd family. As to quaternary structure, homodimer. The cofactor is [2Fe-2S] cluster. It depends on Mg(2+) as a cofactor.

It catalyses the reaction (2R)-2,3-dihydroxy-3-methylbutanoate = 3-methyl-2-oxobutanoate + H2O. The catalysed reaction is (2R,3R)-2,3-dihydroxy-3-methylpentanoate = (S)-3-methyl-2-oxopentanoate + H2O. It functions in the pathway amino-acid biosynthesis; L-isoleucine biosynthesis; L-isoleucine from 2-oxobutanoate: step 3/4. The protein operates within amino-acid biosynthesis; L-valine biosynthesis; L-valine from pyruvate: step 3/4. Functions in the biosynthesis of branched-chain amino acids. Catalyzes the dehydration of (2R,3R)-2,3-dihydroxy-3-methylpentanoate (2,3-dihydroxy-3-methylvalerate) into 2-oxo-3-methylpentanoate (2-oxo-3-methylvalerate) and of (2R)-2,3-dihydroxy-3-methylbutanoate (2,3-dihydroxyisovalerate) into 2-oxo-3-methylbutanoate (2-oxoisovalerate), the penultimate precursor to L-isoleucine and L-valine, respectively. The polypeptide is Dihydroxy-acid dehydratase (Shouchella clausii (strain KSM-K16) (Alkalihalobacillus clausii)).